Consider the following 362-residue polypeptide: Myricetin 3'-O-methyltransferase 4 (362 aa).

Position 229 (aspartate 229) interacts with S-adenosyl-L-methionine. Histidine 267 (proton acceptor) is an active-site residue.

It belongs to the class I-like SAM-binding methyltransferase superfamily. Cation-independent O-methyltransferase family. Homodimer. As to expression, mainly expressed in stem and petiole trichomes.

The enzyme catalyses myricetin + S-adenosyl-L-methionine = laricitrin + S-adenosyl-L-homocysteine + H(+). It participates in flavonoid metabolism. Its function is as follows. Flavonoid 3'-O-methyltransferase involved in the biosynthesis of polymethoxylated flavonoids natural products such as myricetin derivatives, aroma compounds possessing antioxidant properties and exhibiting pharmacological activities such as anti-carcinogen, anti-viral, anti-thrombotic, anti-diabetic, anti-atherosclerotic, and anti-inflammatory effects. Catalyzes S-adenosylmethionine-dependent regioselective 3'-O-methylation of flavonoids; active on various hydroxylated flavonoid substrates, including myricetin, thus producing 3'-methyl myricetin (laricitrin). In Solanum lycopersicum (Tomato), this protein is Myricetin 3'-O-methyltransferase 4.